The primary structure comprises 383 residues: Probable tRNA sulfurtransferase (383 aa).

Positions Asn58–Lys158 constitute a THUMP domain. Residues Leu176 to Leu177, Thr201 to Phe202, Arg259, Gly281, and Gln290 each bind ATP.

The protein belongs to the ThiI family.

Its subcellular location is the cytoplasm. The enzyme catalyses [ThiI sulfur-carrier protein]-S-sulfanyl-L-cysteine + a uridine in tRNA + 2 reduced [2Fe-2S]-[ferredoxin] + ATP + H(+) = [ThiI sulfur-carrier protein]-L-cysteine + a 4-thiouridine in tRNA + 2 oxidized [2Fe-2S]-[ferredoxin] + AMP + diphosphate. It catalyses the reaction [ThiS sulfur-carrier protein]-C-terminal Gly-Gly-AMP + S-sulfanyl-L-cysteinyl-[cysteine desulfurase] + AH2 = [ThiS sulfur-carrier protein]-C-terminal-Gly-aminoethanethioate + L-cysteinyl-[cysteine desulfurase] + A + AMP + 2 H(+). The protein operates within cofactor biosynthesis; thiamine diphosphate biosynthesis. Its function is as follows. Catalyzes the ATP-dependent transfer of a sulfur to tRNA to produce 4-thiouridine in position 8 of tRNAs, which functions as a near-UV photosensor. Also catalyzes the transfer of sulfur to the sulfur carrier protein ThiS, forming ThiS-thiocarboxylate. This is a step in the synthesis of thiazole, in the thiamine biosynthesis pathway. The sulfur is donated as persulfide by IscS. The protein is Probable tRNA sulfurtransferase of Malacoplasma penetrans (strain HF-2) (Mycoplasma penetrans).